A 432-amino-acid chain; its full sequence is MTTSATLFSRAQQVIPGGVNSPVRAFKGVGGTPVFIEKANGAYIFDTEGKQYIDYVGSWGPMILGHNHPSILSAVLKTAENGLSFGTPTPLEIELAELICQLVPSIEMVRMVNSGTEATMSAIRLARGYTKRDKILKFEGCYHGHSDSLLVKAGSGSLTLGQPSSPGVPEDFAKHTITCEYNNLQSVKNAFEQYPDQIACVIVEPVAGNMNCILPKQDFLQGLRQLCNEYGSLFIIDEVMTGFRVALGGAQSYYEVTPDLTTLGKVIGGGMPVGAFGGKKEIMQYIAPTGPVYQAGTLSGNPIAMSAGIACLNELKKEGNEQRLAMLTKKLALGLKNLANQHNIPLVVNYVGGMFGIFFTTQNEVTSYQQAIQCDVEKFNLFFHKMLEQGVYLAPSAFEAGFMSLAHTDADIDRTLQAADIAFASLCSSSFS.

Lys-265 is modified (N6-(pyridoxal phosphate)lysine).

The protein belongs to the class-III pyridoxal-phosphate-dependent aminotransferase family. HemL subfamily. As to quaternary structure, homodimer. Pyridoxal 5'-phosphate is required as a cofactor.

It is found in the cytoplasm. It carries out the reaction (S)-4-amino-5-oxopentanoate = 5-aminolevulinate. Its pathway is porphyrin-containing compound metabolism; protoporphyrin-IX biosynthesis; 5-aminolevulinate from L-glutamyl-tRNA(Glu): step 2/2. This Histophilus somni (strain 129Pt) (Haemophilus somnus) protein is Glutamate-1-semialdehyde 2,1-aminomutase.